Consider the following 226-residue polypeptide: Putative 5'-nucleotidase alr3139 (226 aa).

A divalent metal cation is bound by residues Asp-8, Asp-9, Ser-38, and Asn-89.

Belongs to the SurE nucleotidase family. It depends on a divalent metal cation as a cofactor.

The protein resides in the cytoplasm. The catalysed reaction is a ribonucleoside 5'-phosphate + H2O = a ribonucleoside + phosphate. Its function is as follows. Nucleotidase that shows phosphatase activity on nucleoside 5'-monophosphates. This Nostoc sp. (strain PCC 7120 / SAG 25.82 / UTEX 2576) protein is Putative 5'-nucleotidase alr3139.